The following is a 155-amino-acid chain: Prespore-specific protein E (155 aa).

The N-terminal stretch at 1–20 (MRFISIFLIIVALCVSSSWA) is a signal peptide. 4 N-linked (GlcNAc...) asparagine glycosylation sites follow: Asn22, Asn82, Asn85, and Asn102. The O-linked (GlcNAc) serine glycan is linked to Ser105. Asn133 carries GPI-like-anchor amidated asparagine lipidation. Positions 134-155 (SADKVAVGIAIIFGALISLLAL) are cleaved as a propeptide — removed in mature form.

In terms of processing, the GPI-like-anchor contains a phosphoceramide group, rather than a phosphatidyl group.

It localises to the cell membrane. The chain is Prespore-specific protein E (pspE) from Dictyostelium discoideum (Social amoeba).